A 330-amino-acid chain; its full sequence is Polyprenal reductase (330 aa).

Topologically, residues 1-16 (MAGWAGFELSALNPLR) are cytoplasmic. Residues 17–37 (TLWLALAAAFLFALLLQLAPA) form a helical membrane-spanning segment. Over 38–80 (RLLPSCALFQDLLRYGKTKQSGSRRPAVCRAFDVPKRYFSHFY) the chain is Lumenal. A helical membrane pass occupies residues 81-101 (VISVVWNGSLLWLLSQSLFLG). At 102–132 (APFPNWLSALLRTLGATQFQALEMESKASRM) the chain is on the cytoplasmic side. A helical membrane pass occupies residues 133–153 (PAAELALSAFLVLVFLWVHSL). At 154–169 (RRLFECFYVSVFSNAA) the chain is on the lumenal side. A helical transmembrane segment spans residues 170 to 190 (IHVVQYCFGLVYYVLVGLTVL). Topologically, residues 191-206 (SQVPMDDKNVYVLGKN) are cytoplasmic. The helical transmembrane segment at 207 to 227 (LLIQARWFHILGMVMFFWSSA) threads the bilayer. The Lumenal segment spans residues 228–277 (HQYKCHVILSNLRRNKKGVVIHCQHRIPFGDWFEYVSSANYLAELMIYIS). Residues 278 to 298 (MAVTFGLHNLTWWLVVTYVFS) form a helical membrane-spanning segment. The Cytoplasmic portion of the chain corresponds to 299–330 (SQALSAFFNHKFYRSTFVSYPKHRKAFLPFLF).

Belongs to the steroid 5-alpha reductase family. Polyprenal reductase subfamily.

The protein localises to the endoplasmic reticulum membrane. The catalysed reaction is a di-trans,poly-cis-dolichal + NADP(+) = a di-trans,poly-cis-polyprenal + NADPH + H(+). The enzyme catalyses a 3-oxo-5alpha-steroid + NADP(+) = a 3-oxo-Delta(4)-steroid + NADPH + H(+). It carries out the reaction androst-4-ene-3,17-dione + NADPH + H(+) = 5alpha-androstan-3,17-dione + NADP(+). It catalyses the reaction 17beta-hydroxy-5alpha-androstan-3-one + NADP(+) = testosterone + NADPH + H(+). The protein operates within protein modification; protein glycosylation. Plays a key role in early steps of protein N-linked glycosylation by being involved in the conversion of polyprenol into dolichol. Acts as a polyprenal reductase that mediates the reduction of polyprenal into dolichal in a NADP-dependent mechanism. Dolichols are required for the synthesis of dolichol-linked monosaccharides and the oligosaccharide precursor used for N-glycosylation. Also able to convert testosterone (T) into 5-alpha-dihydrotestosterone (DHT). The polypeptide is Polyprenal reductase (Mus musculus (Mouse)).